Consider the following 372-residue polypeptide: Cytochrome b (372 aa).

Helical transmembrane passes span 25–45, 69–90, 105–125, and 170–190; these read FGSM…FLAI, WIMQ…YIHI, WLSG…GYVL, and FFAL…IHIM. Residues histidine 75 and histidine 89 each coordinate heme b. The heme b site is built by histidine 174 and histidine 188. Histidine 193 is a binding site for a ubiquinone. Helical transmembrane passes span 218–238, 280–300, 312–332, and 339–358; these read YKDM…LSFS, LGGT…PFTH, LSQI…WTAS, and FILI…IMAP.

Belongs to the cytochrome b family. The cytochrome bc1 complex contains 3 respiratory subunits (MT-CYB, CYC1 and UQCRFS1), 2 core proteins (UQCRC1 and UQCRC2) and probably 6 low-molecular weight proteins. Requires heme b as cofactor.

The protein resides in the mitochondrion inner membrane. Its function is as follows. Component of the ubiquinol-cytochrome c reductase complex (complex III or cytochrome b-c1 complex) that is part of the mitochondrial respiratory chain. The b-c1 complex mediates electron transfer from ubiquinol to cytochrome c. Contributes to the generation of a proton gradient across the mitochondrial membrane that is then used for ATP synthesis. The sequence is that of Cytochrome b (MT-CYB) from Hemachatus haemachatus (Rinkhals).